We begin with the raw amino-acid sequence, 147 residues long: Urease accessory protein UreE (147 aa).

Belongs to the UreE family.

It is found in the cytoplasm. Functionally, involved in urease metallocenter assembly. Binds nickel. Probably functions as a nickel donor during metallocenter assembly. This chain is Urease accessory protein UreE, found in Nostoc sp. (strain PCC 7120 / SAG 25.82 / UTEX 2576).